A 569-amino-acid polypeptide reads, in one-letter code: Beta-lactamase-like protein 4 (569 aa).

The signal sequence occupies residues 1 to 19 (MKYYLYLFLLFTFANLLYS). Residues asparagine 87, asparagine 172, asparagine 239, asparagine 240, asparagine 250, asparagine 299, asparagine 343, asparagine 412, asparagine 419, asparagine 436, asparagine 468, asparagine 509, and asparagine 535 are each glycosylated (N-linked (GlcNAc...) asparagine).

This sequence belongs to the beta-lactamase family.

The protein localises to the secreted. This Dictyostelium discoideum (Social amoeba) protein is Beta-lactamase-like protein 4.